Reading from the N-terminus, the 25-residue chain is Glucomannokinase (25 aa).

This sequence belongs to the ROK (NagC/XylR) family. In terms of assembly, homodimer.

It catalyses the reaction D-glucose + ATP = D-glucose 6-phosphate + ADP + H(+). It carries out the reaction D-mannose + ATP = D-mannose 6-phosphate + ADP + H(+). It participates in carbohydrate degradation; glycolysis; D-glyceraldehyde 3-phosphate and glycerone phosphate from D-glucose: step 1/4. It functions in the pathway carbohydrate metabolism; mannose metabolism. Competitively inhibited by 2-deoxy-glucose. The enzyme has great affinity for glucose and mannose. The chain is Glucomannokinase from Segatella bryantii (Prevotella bryantii).